The following is a 417-amino-acid chain: Gamma-glutamyl phosphate reductase (417 aa).

The protein belongs to the gamma-glutamyl phosphate reductase family.

Its subcellular location is the cytoplasm. The enzyme catalyses L-glutamate 5-semialdehyde + phosphate + NADP(+) = L-glutamyl 5-phosphate + NADPH + H(+). The protein operates within amino-acid biosynthesis; L-proline biosynthesis; L-glutamate 5-semialdehyde from L-glutamate: step 2/2. In terms of biological role, catalyzes the NADPH-dependent reduction of L-glutamate 5-phosphate into L-glutamate 5-semialdehyde and phosphate. The product spontaneously undergoes cyclization to form 1-pyrroline-5-carboxylate. The chain is Gamma-glutamyl phosphate reductase from Erwinia tasmaniensis (strain DSM 17950 / CFBP 7177 / CIP 109463 / NCPPB 4357 / Et1/99).